The chain runs to 309 residues: uncharacterized protein (309 aa).

Positions 17–254 (RYGQKVHKLT…AGEMIRHTPP (238 aa)) constitute a Radical SAM core domain. 3 residues coordinate [4Fe-4S] cluster: Cys-33, Cys-45, and Cys-48.

It belongs to the radical SAM superfamily. [4Fe-4S] cluster is required as a cofactor.

This is an uncharacterized protein from Escherichia coli O157:H7.